A 179-amino-acid chain; its full sequence is MASSTQTNVTIAPKTLQQLRQQDAVILVDVREPLEFVGEHITDAYSLPLSRLNPSQLPQAEGKTTVLYCQSSNRSGNALQQLRSAGVEGIIHLEGGLLAWKQAGLPTVKTKNAPISIMRQVQIIAGSLVLTGVLLGSFVAPGFYFLSGFVGAGLLFAGLSGTCMMANLLGKLPYNQIKD.

One can recognise a Rhodanese domain in the interval 21-109 (QQDAVILVDV…WKQAGLPTVK (89 aa)). Transmembrane regions (helical) follow at residues 115-135 (ISIM…GVLL) and 138-158 (FVAP…LFAG).

The protein resides in the cell membrane. This is an uncharacterized protein from Synechocystis sp. (strain ATCC 27184 / PCC 6803 / Kazusa).